The primary structure comprises 204 residues: Large ribosomal subunit protein uL4 (204 aa).

The interval 49–75 (TKGRSDVSGGGKKPWRQKGRGGARAGS) is disordered.

This sequence belongs to the universal ribosomal protein uL4 family. As to quaternary structure, part of the 50S ribosomal subunit.

Its function is as follows. One of the primary rRNA binding proteins, this protein initially binds near the 5'-end of the 23S rRNA. It is important during the early stages of 50S assembly. It makes multiple contacts with different domains of the 23S rRNA in the assembled 50S subunit and ribosome. Functionally, forms part of the polypeptide exit tunnel. This chain is Large ribosomal subunit protein uL4, found in Campylobacter jejuni subsp. jejuni serotype O:23/36 (strain 81-176).